Here is a 370-residue protein sequence, read N- to C-terminus: Metallophosphoesterase 1 homolog (370 aa).

Residues 7–27 (CFVIVLCALIFCEYVADFVVL) traverse the membrane as a helical segment. 6 residues coordinate a divalent metal cation: D52, D94, N132, H225, H275, and H277. The helical transmembrane segment at 328-348 (FVFNSYLSAGILCLIVIGFQL) threads the bilayer.

It belongs to the metallophosphoesterase superfamily. MPPE1 family. Mn(2+) serves as cofactor.

It localises to the membrane. Functionally, metallophosphoesterase. This chain is Metallophosphoesterase 1 homolog (PGAP5), found in Drosophila melanogaster (Fruit fly).